Consider the following 82-residue polypeptide: Large ribosomal subunit protein uL23 (82 aa).

This sequence belongs to the universal ribosomal protein uL23 family. In terms of assembly, part of the 50S ribosomal subunit. Contacts protein L29.

In terms of biological role, binds to 23S rRNA. One of the proteins that surrounds the polypeptide exit tunnel on the outside of the ribosome. In Sulfolobus acidocaldarius (strain ATCC 33909 / DSM 639 / JCM 8929 / NBRC 15157 / NCIMB 11770), this protein is Large ribosomal subunit protein uL23.